The sequence spans 331 residues: Protein RecA (331 aa).

61-68 provides a ligand contact to ATP; that stretch reads GPESSGKT.

The protein belongs to the RecA family.

It localises to the cytoplasm. Its function is as follows. Can catalyze the hydrolysis of ATP in the presence of single-stranded DNA, the ATP-dependent uptake of single-stranded DNA by duplex DNA, and the ATP-dependent hybridization of homologous single-stranded DNAs. It interacts with LexA causing its activation and leading to its autocatalytic cleavage. This Mycoplasma mobile (strain ATCC 43663 / 163K / NCTC 11711) (Mesomycoplasma mobile) protein is Protein RecA.